A 246-amino-acid polypeptide reads, in one-letter code: Ly6/PLAUR domain-containing protein 4 (246 aa).

The N-terminal stretch at 1 to 26 is a signal peptide; it reads MILQAWRSLQLLYLLEAISLLPCTEA. Residue N117 is glycosylated (N-linked (GlcNAc...) asparagine). The 82-residue stretch at 142–223 folds into the UPAR/Ly6 domain; sequence CPSCVGKHDQ…INVLDKSEAV (82 aa). A225 carries GPI-anchor amidated alanine lipidation. Positions 226–246 are cleaved as a propeptide — removed in mature form; sequence GHCSQGISWSVLLCLLILLRD.

The protein resides in the cell membrane. This is Ly6/PLAUR domain-containing protein 4 (Lypd4) from Mus musculus (Mouse).